We begin with the raw amino-acid sequence, 317 residues long: HTH-type transcriptional regulator MetR (317 aa).

An HTH lysR-type domain is found at 1–59; the sequence is MIEVKHLKTLQALRNCGSLAAAAATLHQTQSALSHQFSDLEQRLGFRLFVRKSQPLRFT. The H-T-H motif DNA-binding region spans 19-38; the sequence is LAAAAATLHQTQSALSHQFS.

Belongs to the LysR transcriptional regulatory family.

The protein localises to the cytoplasm. Control of the last step in methionine biosynthesis; MetR is a positive activator of the metA, metE and metH genes. It is also a negative regulator of its own expression. The sequence is that of HTH-type transcriptional regulator MetR (metR) from Escherichia coli O157:H7.